We begin with the raw amino-acid sequence, 418 residues long: Serine hydroxymethyltransferase (418 aa).

Residues Leu121 and Gly125–Leu127 contribute to the (6S)-5,6,7,8-tetrahydrofolate site. Residue Lys230 is modified to N6-(pyridoxal phosphate)lysine. (6S)-5,6,7,8-tetrahydrofolate is bound by residues Glu246 and Ser355–Phe357.

The protein belongs to the SHMT family. Homodimer. The cofactor is pyridoxal 5'-phosphate.

Its subcellular location is the cytoplasm. The catalysed reaction is (6R)-5,10-methylene-5,6,7,8-tetrahydrofolate + glycine + H2O = (6S)-5,6,7,8-tetrahydrofolate + L-serine. It functions in the pathway one-carbon metabolism; tetrahydrofolate interconversion. The protein operates within amino-acid biosynthesis; glycine biosynthesis; glycine from L-serine: step 1/1. Catalyzes the reversible interconversion of serine and glycine with tetrahydrofolate (THF) serving as the one-carbon carrier. This reaction serves as the major source of one-carbon groups required for the biosynthesis of purines, thymidylate, methionine, and other important biomolecules. Also exhibits THF-independent aldolase activity toward beta-hydroxyamino acids, producing glycine and aldehydes, via a retro-aldol mechanism. The protein is Serine hydroxymethyltransferase of Streptococcus pneumoniae (strain Taiwan19F-14).